The primary structure comprises 2542 residues: Ankyrin repeat and KH domain-containing protein 1 (2542 aa).

Met1 carries the N-acetylmethionine modification. Positions 1–10 (MLTDSGGGGT) are enriched in gly residues. 2 disordered regions span residues 1-44 (MLTD…IRTV) and 50-69 (AGPASGVGSSGGGGSGSGTG). Low complexity predominate over residues 20 to 29 (APRSAPAGAS). Residues 57 to 69 (GSSGGGGSGSGTG) show a composition bias toward gly residues. 2 positions are modified to phosphoserine: Ser101 and Ser105. 15 ANK repeats span residues 204-233 (VDTRSLAEACSDGDVNAVRKLLDEGRSVNE), 237-266 (EGESLLCLACSAGYYELAQVLLAMHANVED), 271-300 (GDITPLMAASSGGYLDIVKLLLLHDADVNS), 304-333 (TGNTALTYACAGGFVDIVKVLLNEGANIED), 337-366 (NGHTPLMEAASAGHVEVARVLLDHGAGINT), 371-400 (FKESALTLACYKGHLDMVRFLLEAGADQEH), 404-433 (EMHTALMEACMDGHVEVARLLLDSGAQVNM), 437-466 (SFESPLTLAACGGHVELAALLIERGANLEE), 470-499 (EGYTPLMEAAREGHEEMVALLLAQGANINA), 504-533 (TQETALTLACCGGFSEVADFLIKAGADIEL), 534-563 (GCSTPLMEASQEGHLELVKYLLASGANVHA), 567-596 (TGDTALTYACENGHTDVADVLLQAGADLEH), 600-629 (GGRTPLMKAARAGHLCTVQFLISKGANVNR), 634-663 (NDHTVVSLACAGGHLAVVELLLAHGADPTH), and 667-696 (DGSTMLIEAAKGGHTNVVSYLLDYPNNVLS). A coiled-coil region spans residues 775–852 (LECIVEETEG…RQLQMKTQQQ (78 aa)). The residue at position 803 (Ser803) is a Phosphoserine. ANK repeat units lie at residues 1054-1083 (NHDTALTLACAGGHEELVSVLIARDAKIEH), 1087-1116 (KGFTPLILAATAGHVGVVEILLDKGGDIEA), 1121-1150 (TKDTPLSLACSGGRQEVVDLLLARGANKEH), 1154-1183 (SDYTPLSLAASGGYVNIIKILLNAGAEINS), 1189-1218 (LGISPLMLAAMNGHVPAVKLLLDMGSDINA), 1223-1252 (NRNTALTLACFQGRAEVVSLLLDRKANVEH), 1256-1285 (TGLTPLMEAASGGYAEVGRVLLDKGADVNA), 1291-1320 (SRDTALTIAADKGHYKFCELLIHRGAHIDV), 1324-1353 (KGNTPLWLASNGGHFDVVQLLVQAGADVDA), and 1357-1386 (RKITPLMSAFRKGHVKVVQYLVKEVNQFPS). Residues 1415–1485 (KAKDQQAAEA…ENKPKENSEL (71 aa)) adopt a coiled-coil conformation. 3 disordered regions span residues 1441–1517 (REES…TIGI), 1534–1614 (NVVT…SQEL), and 1632–1664 (SQEEKTSTATSKTQTRLEGEVTPNSLSTSYKTV). Residues 1453 to 1463 (REKRKEKRKKK) show a composition bias toward basic residues. Positions 1464 to 1483 (KEEQKRKQEEDEENKPKENS) are enriched in basic and acidic residues. Residues 1484–1502 (ELPEDEDEEENDEDVEQEV) are compositionally biased toward acidic residues. Low complexity predominate over residues 1503-1517 (PIEPPSATTTTTIGI). Phosphoserine is present on Ser1540. Thr1553 carries the post-translational modification Phosphothreonine. The segment covering 1590–1603 (NSDSDNLDSTDCNS) has biased composition (low complexity). Over residues 1604–1614 (ESSSGGKSQEL) the composition is skewed to polar residues. The residue at position 1632 (Ser1632) is a Phosphoserine. The segment covering 1638–1664 (STATSKTQTRLEGEVTPNSLSTSYKTV) has biased composition (polar residues). A Phosphothreonine modification is found at Thr1653. The region spanning 1695 to 1759 (RRSKKLSVPA…ESTRYAVQLI (65 aa)) is the KH domain. Disordered stretches follow at residues 1886–1923 (NTWGPFPVRPVNPGNTNSSPKHNNTSRLPNQNGTVLPS), 1987–2106 (PSVS…APLT), and 2260–2367 (NMHP…IPPP). Residues 1898–1922 (PGNTNSSPKHNNTSRLPNQNGTVLP) show a composition bias toward polar residues. The segment covering 1987-1996 (PSVSSAPITS) has biased composition (low complexity). Residues 1997–2019 (GQAPTTFLPASTSQAQLSSQKME) are compositionally biased toward polar residues. A compositionally biased stretch (low complexity) spans 2042–2077 (CTPSSTANSCSSSASNTPGAPETHPSSSPTPTSSNT). Positions 2078-2106 (QEEAQPSSVSDLSPMSMPFASNSEPAPLT) are enriched in polar residues. 2 stretches are compositionally biased toward low complexity: residues 2285–2308 (LPSIDPSGSSPSSSSAPLASFSGI) and 2337–2349 (TSASNSSTSAPPT).

This sequence belongs to the mask family. Interacts with PTPN11. Isoform 2 interacts with HIV-1 VPR. Interacts with NOD2. As to expression, ubiquitous with high expression in cervix, spleen and brain. Expressed in hematopoietic cells with increased expression in leukemia cells. Isoform 2 is highly expressed in spleen with almost no expression in muscle and brain.

It localises to the cytoplasm. In terms of biological role, may play a role as a scaffolding protein that may be associated with the abnormal phenotype of leukemia cells. Isoform 2 may possess an antiapoptotic effect and protect cells during normal cell survival through its regulation of caspases. The polypeptide is Ankyrin repeat and KH domain-containing protein 1 (ANKHD1) (Homo sapiens (Human)).